Reading from the N-terminus, the 216-residue chain is Inorganic pyrophosphatase (216 aa).

Substrate contacts are provided by Lys-39, Arg-53, and Tyr-65. Positions 93, 98, and 131 each coordinate Mg(2+). A substrate-binding site is contributed by Tyr-168.

Belongs to the PPase family. In terms of assembly, homohexamer. It depends on Mg(2+) as a cofactor.

It localises to the cytoplasm. It carries out the reaction diphosphate + H2O = 2 phosphate + H(+). Catalyzes the hydrolysis of inorganic pyrophosphate (PPi) forming two phosphate ions. In Chlamydia caviae (strain ATCC VR-813 / DSM 19441 / 03DC25 / GPIC) (Chlamydophila caviae), this protein is Inorganic pyrophosphatase.